The chain runs to 832 residues: Tuftelin-interacting protein 11 (832 aa).

2 disordered regions span residues 1 to 21 (MSMSHLYGRRGDEEEEDGVEI) and 33 to 145 (NEFN…GNWE). Composition is skewed to basic and acidic residues over residues 36–49 (NPDRRRYRQTKEEA) and 88–99 (TAAEEKAEREGS). Residues 121 to 130 (TGGSFKTSQR) are compositionally biased toward polar residues. One can recognise a G-patch domain in the interval 148–194 (TRGIGQKLLQKMGYVPGKGLGKNAQGIVNPIEAKLRKGKGAVGAYGS). Residue serine 209 is modified to Phosphoserine.

Belongs to the TFP11/STIP family. As to quaternary structure, identified in the spliceosome C complex.

It localises to the nucleus. In terms of biological role, involved in pre-mRNA splicing, specifically in spliceosome disassembly during late-stage splicing events. The polypeptide is Tuftelin-interacting protein 11 (tfip11) (Danio rerio (Zebrafish)).